A 110-amino-acid chain; its full sequence is MRQVTIPLIQSKSMFCVIYRSSKRDQTYLYVEKKDDFSRVPEALMKGFGQPQLAMMLPLDGRKKLVNAELEKVKQALSEQGYYLQLPPPPEDLLKQHLSSVGQNTSPADR.

The YcgL domain occupies Met14 to Leu98. The disordered stretch occupies residues Pro87 to Arg110. A compositionally biased stretch (polar residues) spans His97–Arg110.

This Salmonella choleraesuis (strain SC-B67) protein is Protein YcgL.